We begin with the raw amino-acid sequence, 274 residues long: 2,3,4,5-tetrahydropyridine-2,6-dicarboxylate N-succinyltransferase (274 aa).

Substrate is bound by residues Arg103 and Asp140.

Belongs to the transferase hexapeptide repeat family. In terms of assembly, homotrimer.

The protein resides in the cytoplasm. It carries out the reaction (S)-2,3,4,5-tetrahydrodipicolinate + succinyl-CoA + H2O = (S)-2-succinylamino-6-oxoheptanedioate + CoA. It functions in the pathway amino-acid biosynthesis; L-lysine biosynthesis via DAP pathway; LL-2,6-diaminopimelate from (S)-tetrahydrodipicolinate (succinylase route): step 1/3. The polypeptide is 2,3,4,5-tetrahydropyridine-2,6-dicarboxylate N-succinyltransferase (Pasteurella multocida (strain Pm70)).